Reading from the N-terminus, the 298-residue chain is ATP phosphoribosyltransferase (298 aa).

This sequence belongs to the ATP phosphoribosyltransferase family.

It localises to the cytoplasm. It catalyses the reaction 1-(5-phospho-beta-D-ribosyl)-ATP + diphosphate = 5-phospho-alpha-D-ribose 1-diphosphate + ATP. It functions in the pathway amino-acid biosynthesis; L-histidine biosynthesis; L-histidine from 5-phospho-alpha-D-ribose 1-diphosphate: step 1/9. Its function is as follows. Catalyzes the condensation of ATP and 5-phosphoribose 1-diphosphate to form N'-(5'-phosphoribosyl)-ATP (PR-ATP). Has a crucial role in the pathway because the rate of histidine biosynthesis seems to be controlled primarily by regulation of the enzymatic activity. This is ATP phosphoribosyltransferase (HIS1) from Candida albicans (strain SC5314 / ATCC MYA-2876) (Yeast).